Consider the following 301-residue polypeptide: L-threonate dehydrogenase (301 aa).

Residues 6-34 (YSVAVIGLGSMGMGAAVSCINAGLTTYGI) and T101 contribute to the NAD(+) site. K177 is an active-site residue. Residue K245 coordinates NAD(+).

It belongs to the HIBADH-related family. L-threonate dehydrogenase subfamily.

It catalyses the reaction L-threonate + NAD(+) = 2-dehydro-L-erythronate + NADH + H(+). Its function is as follows. Catalyzes oxidation of L-threonate to 2-oxo-tetronate. Can use either NAD(+) or NADP(+) as cosubstrate, with a preference for NAD(+). The polypeptide is L-threonate dehydrogenase (Haemophilus influenzae (strain ATCC 51907 / DSM 11121 / KW20 / Rd)).